The following is a 543-amino-acid chain: Ribonuclease Y (543 aa).

Residues 4–24 traverse the membrane as a helical segment; it reads IIMIPVATAIVSLLVGTVTGY. A KH domain is found at 233-296; that stretch reads TVSVVDLPNE…EIAKRAMERL (64 aa). The HD domain maps to 359–452; sequence VLSHSIEVGK…VVAADTISSA (94 aa).

This sequence belongs to the RNase Y family.

Its subcellular location is the cell membrane. Its function is as follows. Endoribonuclease that initiates mRNA decay. The chain is Ribonuclease Y from Lactobacillus acidophilus (strain ATCC 700396 / NCK56 / N2 / NCFM).